A 484-amino-acid polypeptide reads, in one-letter code: RxLR effector protein PexRD18 (484 aa).

Positions 1 to 20 (MSHQRILLLLMAAFFAWVSA) are cleaved as a signal peptide. Residues 55-79 (RFLRLYDAEVRDTVRGDNDVDREER) carry the RxLR-dEER motif.

It belongs to the RxLR effector family.

The protein localises to the secreted. It localises to the host cell membrane. Effector that enhances P.infestans colonization of Nicotiana benthamiana leaves. The chain is RxLR effector protein PexRD18 from Phytophthora infestans (strain T30-4) (Potato late blight agent).